The chain runs to 356 residues: Probable arabinogalactan endo-beta-1,4-galactanase A (356 aa).

An N-terminal signal peptide occupies residues 1 to 21; sequence MLGKMILLPLFVLLCHSLASA. Asparagine 133 carries an N-linked (GlcNAc...) asparagine glycan. The active-site Proton donor is glutamate 157. Residue glutamate 268 is the Nucleophile of the active site.

It belongs to the glycosyl hydrolase 53 family.

It localises to the secreted. The catalysed reaction is The enzyme specifically hydrolyzes (1-&gt;4)-beta-D-galactosidic linkages in type I arabinogalactans.. Its function is as follows. Endogalactanase involved in the degradation of plant cell wall polysaccharides, and more particularly of hairy regions of pectin. The polypeptide is Probable arabinogalactan endo-beta-1,4-galactanase A (galA) (Neosartorya fischeri (strain ATCC 1020 / DSM 3700 / CBS 544.65 / FGSC A1164 / JCM 1740 / NRRL 181 / WB 181) (Aspergillus fischerianus)).